The sequence spans 246 residues: DNA repair protein RecO (246 aa).

This sequence belongs to the RecO family.

Involved in DNA repair and RecF pathway recombination. The chain is DNA repair protein RecO from Marinobacter nauticus (strain ATCC 700491 / DSM 11845 / VT8) (Marinobacter aquaeolei).